Here is a 322-residue protein sequence, read N- to C-terminus: Cysteine protease yopT1 (322 aa).

The segment at 42-69 (LSHSNRQKKLSATIKHNQSSRSMLDRKL) is disordered. Active-site residues include Cys-139, His-258, and Asp-274.

The protein belongs to the peptidase C58 family. Interacts with human ARHA.

The protein localises to the secreted. Its function is as follows. Cysteine protease, which is translocated into infected cells and plays a central role in pathogenesis by cleaving the C-terminus end of the human small GTPase RhoA/ARHA, a regulator of cytoskeleton. Once cleaved, ARHA loses its lipid modification, and is released from the cell membrane, leading to the subsequent disruption of actin cytoskeleton of the host cell. The chain is Cysteine protease yopT1 (yopT1) from Yersinia enterocolitica serotype O:8 / biotype 1B (strain NCTC 13174 / 8081).